The sequence spans 404 residues: Cysteine desulfurase IscS (404 aa).

Pyridoxal 5'-phosphate-binding positions include 75 to 76 (AT), N155, Q183, and 203 to 205 (SAH). N6-(pyridoxal phosphate)lysine is present on K206. T243 is a binding site for pyridoxal 5'-phosphate. C328 serves as the catalytic Cysteine persulfide intermediate. C328 serves as a coordination point for [2Fe-2S] cluster.

This sequence belongs to the class-V pyridoxal-phosphate-dependent aminotransferase family. NifS/IscS subfamily. Homodimer. Forms a heterotetramer with IscU, interacts with other sulfur acceptors. Requires pyridoxal 5'-phosphate as cofactor.

The protein resides in the cytoplasm. The catalysed reaction is (sulfur carrier)-H + L-cysteine = (sulfur carrier)-SH + L-alanine. Its pathway is cofactor biosynthesis; iron-sulfur cluster biosynthesis. Its function is as follows. Master enzyme that delivers sulfur to a number of partners involved in Fe-S cluster assembly, tRNA modification or cofactor biosynthesis. Catalyzes the removal of elemental sulfur atoms from cysteine to produce alanine. Functions as a sulfur delivery protein for Fe-S cluster synthesis onto IscU, an Fe-S scaffold assembly protein, as well as other S acceptor proteins. The protein is Cysteine desulfurase IscS of Pseudomonas aeruginosa (strain LESB58).